Here is a 382-residue protein sequence, read N- to C-terminus: Alkane 1-monooxygenase 2 (382 aa).

4 helical membrane-spanning segments follow: residues 17 to 37 (GYLAFWAIMVPLVPFSAFVGV), 45 to 65 (WAWFMYAFIFGIIPVLDYLVG), 88 to 108 (VSAIAMGFVWIAVLFYAGHIF), and 114 to 134 (GLLGKIGWIVSIGTVGGIIAI). Residues His138, His142, His168, His172, and His173 each contribute to the Fe cation site. The chain crosses the membrane as a helical span at residues 236–256 (ALFAATFGLLWGWQGVVFFLG). Residues His312, His315, and His316 each contribute to the Fe cation site.

The protein belongs to the fatty acid desaturase type 1 family. AlkB subfamily. Requires Fe(3+) as cofactor.

Its subcellular location is the cell inner membrane. The enzyme catalyses octane + 2 reduced [rubredoxin] + O2 + 2 H(+) = 2 oxidized [rubredoxin] + octan-1-ol + H2O. The protein operates within hydrocarbon metabolism; alkane degradation. Its function is as follows. Catalyzes the hydroxylation of n-alkanes in the presence of a NADH-rubredoxin reductase and rubredoxin. It preferably hydroxylases C8-C16 hydrocarbons. In Alcanivorax borkumensis (strain ATCC 700651 / DSM 11573 / NCIMB 13689 / SK2), this protein is Alkane 1-monooxygenase 2 (alkB2).